The chain runs to 109 residues: Nucleoid-associated protein LBUL_1514 (109 aa).

This sequence belongs to the YbaB/EbfC family. As to quaternary structure, homodimer.

The protein resides in the cytoplasm. It is found in the nucleoid. Functionally, binds to DNA and alters its conformation. May be involved in regulation of gene expression, nucleoid organization and DNA protection. The polypeptide is Nucleoid-associated protein LBUL_1514 (Lactobacillus delbrueckii subsp. bulgaricus (strain ATCC BAA-365 / Lb-18)).